A 267-amino-acid chain; its full sequence is 2-oxoglutarate synthase subunit KorB (267 aa).

Heterotetramer of the KorA, KorB, KorC and KorD subunits.

It catalyses the reaction 2 oxidized [2Fe-2S]-[ferredoxin] + 2-oxoglutarate + CoA = succinyl-CoA + 2 reduced [2Fe-2S]-[ferredoxin] + CO2 + H(+). This is 2-oxoglutarate synthase subunit KorB (korB) from Archaeoglobus fulgidus (strain ATCC 49558 / DSM 4304 / JCM 9628 / NBRC 100126 / VC-16).